A 438-amino-acid polypeptide reads, in one-letter code: Adenylyltransferase and sulfurtransferase MOCS3 (438 aa).

ATP contacts are provided by residues Gly80, Asp101, 108–112, Lys125, and 169–170; these read TNLHR and DN. Zn(2+) is bound by residues Cys210 and Cys213. The Glycyl thioester intermediate; for adenylyltransferase activity role is filled by Cys227. Zn(2+) is bound by residues Cys285 and Cys288. The Rhodanese domain maps to 335-436; sequence SKQRHVLVDV…WTRNVDKEFP (102 aa). Cys392 (cysteine persulfide intermediate; for sulfurtransferase activity) is an active-site residue.

This sequence in the N-terminal section; belongs to the HesA/MoeB/ThiF family. UBA4 subfamily. It depends on Zn(2+) as a cofactor.

The protein resides in the cytoplasm. It localises to the cytosol. The catalysed reaction is [molybdopterin-synthase sulfur-carrier protein]-C-terminal Gly-Gly + ATP + H(+) = [molybdopterin-synthase sulfur-carrier protein]-C-terminal Gly-Gly-AMP + diphosphate. It catalyses the reaction [molybdopterin-synthase sulfur-carrier protein]-C-terminal Gly-Gly-AMP + S-sulfanyl-L-cysteinyl-[cysteine desulfurase] + AH2 = [molybdopterin-synthase sulfur-carrier protein]-C-terminal-Gly-aminoethanethioate + L-cysteinyl-[cysteine desulfurase] + A + AMP + 2 H(+). It participates in tRNA modification; 5-methoxycarbonylmethyl-2-thiouridine-tRNA biosynthesis. The protein operates within cofactor biosynthesis; molybdopterin biosynthesis. Its function is as follows. Plays a central role in 2-thiolation of mcm(5)S(2)U at tRNA wobble positions of cytosolic tRNA(Lys), tRNA(Glu) and tRNA(Gln). Also essential during biosynthesis of the molybdenum cofactor. Acts by mediating the C-terminal thiocarboxylation of sulfur carriers URM1 and MOCS2A. Its N-terminus first activates URM1 and MOCS2A as acyl-adenylates (-COAMP), then the persulfide sulfur on the catalytic cysteine is transferred to URM1 and MOCS2A to form thiocarboxylation (-COSH) of their C-terminus. The reaction probably involves hydrogen sulfide that is generated from the persulfide intermediate and that acts as a nucleophile towards URM1 and MOCS2A. Subsequently, a transient disulfide bond is formed. Does not use thiosulfate as sulfur donor; NFS1 probably acting as a sulfur donor for thiocarboxylation reactions. In Culex quinquefasciatus (Southern house mosquito), this protein is Adenylyltransferase and sulfurtransferase MOCS3.